A 592-amino-acid polypeptide reads, in one-letter code: Potassium-transporting ATPase potassium-binding subunit (592 aa).

The next 13 membrane-spanning stretches (helical) occupy residues Trp6–Tyr26, Ala67–Leu87, Gly136–Ile156, Leu179–Ile199, Leu283–Phe303, Gln312–Tyr332, Phe359–Val379, Ile389–Gly409, Gly411–Gly431, Ile450–Leu470, Leu489–Leu511, Val519–Leu539, and Phe559–Leu579.

The protein belongs to the KdpA family. As to quaternary structure, the system is composed of three essential subunits: KdpA, KdpB and KdpC.

The protein localises to the cell inner membrane. Part of the high-affinity ATP-driven potassium transport (or Kdp) system, which catalyzes the hydrolysis of ATP coupled with the electrogenic transport of potassium into the cytoplasm. This subunit binds the periplasmic potassium ions and delivers the ions to the membrane domain of KdpB through an intramembrane tunnel. The sequence is that of Potassium-transporting ATPase potassium-binding subunit from Geotalea uraniireducens (strain Rf4) (Geobacter uraniireducens).